Consider the following 547-residue polypeptide: Oncoprotein-induced transcript 3 protein (547 aa).

An N-terminal signal peptide occupies residues Met1–Pro19. Residues Asn89 and Asn116 are each glycosylated (N-linked (GlcNAc...) asparagine). The EGF-like; calcium-binding domain occupies Asp182 to Glu222. 3 cysteine pairs are disulfide-bonded: Cys186-Cys197, Cys193-Cys206, and Cys208-Cys221. The region spanning Phe267 to Arg516 is the ZP domain. N-linked (GlcNAc...) asparagine glycosylation is present at Asn299. A disordered region spans residues Glu520 to Asp547.

It is found in the nucleus envelope. May be involved in hepatocellular function and development. The sequence is that of Oncoprotein-induced transcript 3 protein (OIT3) from Bos taurus (Bovine).